Consider the following 474-residue polypeptide: MAAVQVRRRGRALALALWAGFALSVGGGVRARDGLATPPAFEGQAAPAVSWPCPPPADRLDDLALLEAIDLALCHSPALRQGWARIKARSAEVGLARAPYYPSVALSAGRSAQRRSTGLGEDGVRNNVMAVTLAWRLFDSGARSAALRAAQAQLDEAAQAYGAVLQDKLAEVVGAYYEAATARQALHTAVEDTEIARRSASIAARRARAGLDSHGDVLHAQAALERARLAQAQAEGAQARALAGLAQVLGVDPATPIVLAPGPLAPQRIEDRELAQWLRDARQRHPAIKAAQAGLAAATAQVDVARATDMPTVDLSLGHYRNSSENVSVFAGSSRSVSASLNLRIPLFDGFARRHRIQGARAEVQRQEALLDQARLATGAAVARAYADLRAARASHEASLRWLKAARAAYESDLRRYEAGVGGVAELLRAQSDWLSARQRHVLYAAQLRTRALALLAAAGELGRSTIDGDPPKE.

The signal sequence occupies residues Met1–Ala31.

The protein belongs to the outer membrane factor (OMF) (TC 1.B.17) family.

The protein localises to the cell outer membrane. Functionally, cyaE is necessary for transport of calmodulin-sensitive adenylate cyclase-hemolysin (cyclolysin). This Bordetella pertussis (strain Tohama I / ATCC BAA-589 / NCTC 13251) protein is Protein CyaE (cyaE).